Reading from the N-terminus, the 160-residue chain is Type-1 angiotensin II receptor-associated protein (160 aa).

The Extracellular portion of the chain corresponds to 1 to 9 (MELPAVNLK). Residues 10 to 30 (VILLVHWLLTTWGCLAFSGSY) traverse the membrane as a helical segment. Residues 31–53 (AWGNFTILALGVWAVAQRDSVDA) are Cytoplasmic-facing. Residues 54 to 74 (IGMFLGGLVATIFLDIIYISI) form a helical membrane-spanning segment. The Extracellular portion of the chain corresponds to 75–86 (FYSSVAVGDTGR). A helical transmembrane segment spans residues 87–107 (FSAGMAIFSLLLKPFSCCLVY). At 108-160 (HMHRERGGELPLRSDFFGPSQEHSAYQTIDSSDSPADPLASLENKGQAAPRGY) the chain is on the cytoplasmic side. Positions 110–122 (HRERGGELPLRSD) are interaction with AGTR1. Serine 127 is subject to Phosphoserine. A disordered region spans residues 128–160 (QEHSAYQTIDSSDSPADPLASLENKGQAAPRGY). At threonine 135 the chain carries Phosphothreonine. Residues 137 to 149 (DSSDSPADPLASL) show a composition bias toward low complexity. Serine 138 is subject to Phosphoserine.

Interacts with RACK1, and with the carboxy-terminal region of AGTR1.

Its subcellular location is the endoplasmic reticulum membrane. It is found in the golgi apparatus membrane. The protein localises to the cytoplasmic vesicle membrane. Functionally, appears to be a negative regulator of type-1 angiotensin II receptor-mediated signaling by regulating receptor internalization as well as mechanism of receptor desensitization such as phosphorylation. May play a role of negative regulator in cardiomyocyte hypertrophy induced by angiotensin II through an inhibition of p38 mitogen-activated protein kinase pathway. Attenuates type-1 angiotensin II receptor growth promoting effect and angiotensin II-induced phosphorylation of protein kinase AKT and of STAT3. The polypeptide is Type-1 angiotensin II receptor-associated protein (Agtrap) (Rattus norvegicus (Rat)).